A 480-amino-acid chain; its full sequence is 2-succinylbenzoate--CoA ligase (480 aa).

The protein belongs to the ATP-dependent AMP-binding enzyme family. MenE subfamily.

The enzyme catalyses 2-succinylbenzoate + ATP + CoA = 2-succinylbenzoyl-CoA + AMP + diphosphate. Its pathway is quinol/quinone metabolism; 1,4-dihydroxy-2-naphthoate biosynthesis; 1,4-dihydroxy-2-naphthoate from chorismate: step 5/7. It participates in quinol/quinone metabolism; menaquinone biosynthesis. Functionally, converts 2-succinylbenzoate (OSB) to 2-succinylbenzoyl-CoA (OSB-CoA). The chain is 2-succinylbenzoate--CoA ligase from Oceanobacillus iheyensis (strain DSM 14371 / CIP 107618 / JCM 11309 / KCTC 3954 / HTE831).